The sequence spans 425 residues: WD repeat-containing protein JIP5 (425 aa).

WD repeat units lie at residues 9–48 (QLDS…SDDS), 71–110 (RHKG…VTAK), 117–158 (LANG…AKSA), 219–262 (ELLS…DQDE), and 321–358 (LRQE…DVPE). A disordered region spans residues 354–425 (QDVPEDDEDE…HGILHFSGLA (72 aa)). 2 stretches are compositionally biased toward acidic residues: residues 356–368 (VPED…EEEA) and 378–396 (SDED…EDDE). The segment covering 399–414 (QKRKKRRKGKGGKQAK) has biased composition (basic residues).

This sequence belongs to the WD repeat WDR55 family.

It is found in the nucleus. The protein localises to the nucleolus. This is WD repeat-containing protein JIP5 (JIP5) from Phaeosphaeria nodorum (strain SN15 / ATCC MYA-4574 / FGSC 10173) (Glume blotch fungus).